A 190-amino-acid chain; its full sequence is Pyridoxamine 5'-phosphate oxidase C1952.08c homolog (190 aa).

Residues serine 62 and lysine 69 each contribute to the FMN site.

The protein belongs to the pyridoxamine 5'-phosphate oxidase family. FMN is required as a cofactor.

It is found in the cytoplasm. The protein localises to the nucleus. The protein is Pyridoxamine 5'-phosphate oxidase C1952.08c homolog of Schizosaccharomyces pombe (strain 972 / ATCC 24843) (Fission yeast).